The primary structure comprises 430 residues: MTTLTLNTSLLSSRRILAAFSGGLDSTVLLHQLVLWRERHPDVTLRAIHIHHGLSPHADSWVRHCETVCERWQVPLVVERVTLADNGLGIEAHAREARYRAFAQTLLPGEVLATAQHLDDQCETFLLALKRGSGPAGLSAMGERSPFAGTLLLRPLLRETRKTLEQWAVRHGLCWIEDESNQDDAYDRNFLRLRALPLLQQRWPHFPAAVARSATLCAEQERLLDELLASDLTDCITAEGTLRLSPLMSMSDVRRAAILRRWLAMRNAPMPSRDALERIWQEVALARDDASPCLRFGDHEIRRYQSQLWWIKSVAGQHETTVAWPVWQTPLALPAGLGTVQLVPGGELRRPREEESVSIRFKAPGVLHIVGRNGGRKLKKIWQEQGIPPWRRDTTPLLFYGETLIAAAGVFVTREGAAEDKEGVSLVWHA.

21–26 (SGGLDS) provides a ligand contact to ATP.

This sequence belongs to the tRNA(Ile)-lysidine synthase family.

It localises to the cytoplasm. It carries out the reaction cytidine(34) in tRNA(Ile2) + L-lysine + ATP = lysidine(34) in tRNA(Ile2) + AMP + diphosphate + H(+). In terms of biological role, ligates lysine onto the cytidine present at position 34 of the AUA codon-specific tRNA(Ile) that contains the anticodon CAU, in an ATP-dependent manner. Cytidine is converted to lysidine, thus changing the amino acid specificity of the tRNA from methionine to isoleucine. The polypeptide is tRNA(Ile)-lysidine synthase (Salmonella typhimurium (strain LT2 / SGSC1412 / ATCC 700720)).